Consider the following 73-residue polypeptide: Translation initiation factor IF-1 3 (73 aa).

Positions 1–72 (MAKEELVEFG…TKGRINYRHK (72 aa)) constitute an S1-like domain.

It belongs to the IF-1 family. As to quaternary structure, component of the 30S ribosomal translation pre-initiation complex which assembles on the 30S ribosome in the order IF-2 and IF-3, IF-1 and N-formylmethionyl-tRNA(fMet); mRNA recruitment can occur at any time during PIC assembly.

Its subcellular location is the cytoplasm. One of the essential components for the initiation of protein synthesis. Stabilizes the binding of IF-2 and IF-3 on the 30S subunit to which N-formylmethionyl-tRNA(fMet) subsequently binds. Helps modulate mRNA selection, yielding the 30S pre-initiation complex (PIC). Upon addition of the 50S ribosomal subunit IF-1, IF-2 and IF-3 are released leaving the mature 70S translation initiation complex. This Cupriavidus pinatubonensis (strain JMP 134 / LMG 1197) (Cupriavidus necator (strain JMP 134)) protein is Translation initiation factor IF-1 3.